The sequence spans 403 residues: Probable tRNA sulfurtransferase (403 aa).

Residues 60 to 165 (QLAEERLKPI…KEGVFLSCRT (106 aa)) form the THUMP domain. ATP is bound by residues 183-184 (ML), 208-209 (HF), arginine 265, glycine 287, and glutamine 296.

The protein belongs to the ThiI family.

It is found in the cytoplasm. It catalyses the reaction [ThiI sulfur-carrier protein]-S-sulfanyl-L-cysteine + a uridine in tRNA + 2 reduced [2Fe-2S]-[ferredoxin] + ATP + H(+) = [ThiI sulfur-carrier protein]-L-cysteine + a 4-thiouridine in tRNA + 2 oxidized [2Fe-2S]-[ferredoxin] + AMP + diphosphate. It carries out the reaction [ThiS sulfur-carrier protein]-C-terminal Gly-Gly-AMP + S-sulfanyl-L-cysteinyl-[cysteine desulfurase] + AH2 = [ThiS sulfur-carrier protein]-C-terminal-Gly-aminoethanethioate + L-cysteinyl-[cysteine desulfurase] + A + AMP + 2 H(+). The protein operates within cofactor biosynthesis; thiamine diphosphate biosynthesis. Functionally, catalyzes the ATP-dependent transfer of a sulfur to tRNA to produce 4-thiouridine in position 8 of tRNAs, which functions as a near-UV photosensor. Also catalyzes the transfer of sulfur to the sulfur carrier protein ThiS, forming ThiS-thiocarboxylate. This is a step in the synthesis of thiazole, in the thiamine biosynthesis pathway. The sulfur is donated as persulfide by IscS. This chain is Probable tRNA sulfurtransferase, found in Listeria monocytogenes serotype 4a (strain HCC23).